The sequence spans 528 residues: Na(+)/H(+) antiporter NhaB (528 aa).

Transmembrane regions (helical) follow at residues 23 to 43, 45 to 65, 90 to 110, 136 to 156, 204 to 224, 237 to 257, 305 to 325, 350 to 370, 392 to 412, 450 to 470, and 479 to 499; these read VAII…NPFV, GWLL…CYPL, LVAN…IYFM, CFAA…AVVI, LLMH…VGEP, FGEF…CGLI, GIIA…VGLI, EEAL…AVII, LALF…VFVG, ATPN…APLI, and VMAL…IMFF.

It belongs to the NhaB Na(+)/H(+) (TC 2.A.34) antiporter family.

It is found in the cell inner membrane. The catalysed reaction is 2 Na(+)(in) + 3 H(+)(out) = 2 Na(+)(out) + 3 H(+)(in). In terms of biological role, na(+)/H(+) antiporter that extrudes sodium in exchange for external protons. Can also transport lithium and potassium. This is Na(+)/H(+) antiporter NhaB from Vibrio parahaemolyticus serotype O3:K6 (strain RIMD 2210633).